The following is a 775-amino-acid chain: Tumor necrosis factor alpha-induced protein 3 (775 aa).

Alanine 2 carries the post-translational modification N-acetylalanine. The interval 58–300 (PQFREIIHKA…LTDPENEMKE (243 aa)) is TRAF-binding. Positions 92 to 263 (LVALKTNGDG…SQHFVPLVTL (172 aa)) constitute an OTU domain. Aspartate 100 is an active-site residue. Catalysis depends on cysteine 103, which acts as the Nucleophile. 3 interaction with ubiquitin regions span residues 157–159 (LCY), 190–192 (SLE), and 224–227 (FAPL). Catalysis depends on histidine 256, which acts as the Proton acceptor. Residues 369 to 775 (AQNPLEPSTP…ECYQFKQMYG (407 aa)) form an interaction with TNIP1 region. The segment at 381–416 (SLMDIKCETPNCPFFMSVNTQPLCHECSERRQKNQS) adopts an A20-type 1 zinc-finger fold. An interaction with RIPK1 region spans residues 386-445 (KCETPNCPFFMSVNTQPLCHECSERRQKNQSKLPKLNSKLGPEGLPGVGLGSSNWSPEET). The Zn(2+) site is built by cysteine 387, cysteine 392, cysteine 404, and cysteine 407. Residues 415–455 (QSKLPKLNSKLGPEGLPGVGLGSSNWSPEETAGGPHSAPPT) form a disordered region. Serine 451 carries the post-translational modification Phosphoserine. 2 consecutive A20-type zinc fingers follow at residues 464-499 (ETTAMKCRSPGCPFTLNVQHNGFCERCHARQINASH) and 500-533 (TADPGKCQACLQDVTRTFNGICSTCFKRTTAEPS). Positions 470, 475, 487, 490, 506, 509, 521, and 524 each coordinate Zn(2+). Polar residues predominate over residues 567–580 (TGNVSPSGCLSQAA). The interval 567–590 (TGNVSPSGCLSQAARTPGDRAGTS) is disordered. 4 consecutive A20-type zinc fingers follow at residues 586 to 621 (RAGTSKCRKAGCMYFGTPENKGFCTLCFIEYRENKQ), 636 to 671 (FQNNVPCLGRECGTLGSTMFEGYCQKCFIEAQNQRF), 695 to 730 (VASRLKCARASCKNILACRSEELCMECQHLSQRVGS), and 741 to 775 (EPPKQRCRAPACDHFGNAKCNGYCNECYQFKQMYG). Residues 590–640 (SKCRKAGCMYFGTPENKGFCTLCFIEYRENKQSVTASEKAGSPAPRFQNNV) are required for proteasomal degradation of UBE2N and UBE2D3, TRAF6 deubiquitination, and TAX1BP1 interaction with UBE2N. The sufficient for inhibitory activity of TNF-induced NF-kappa-B activity stretch occupies residues 591 to 775 (KCRKAGCMYF…ECYQFKQMYG (185 aa)). Zn(2+)-binding residues include cysteine 592, cysteine 597, cysteine 609, cysteine 612, cysteine 642, cysteine 647, cysteine 659, cysteine 662, cysteine 701, cysteine 706, cysteine 718, cysteine 721, cysteine 747, cysteine 752, cysteine 764, and cysteine 767. The segment at 682–775 (RSSQHRDMPR…ECYQFKQMYG (94 aa)) is required for lysosomal localization and for TRAF2 lysosomal degradation.

The protein belongs to the peptidase C64 family. As to quaternary structure, homodimer. Interacts with TNIP1, TAX1BP1 and TRAF2. Interacts with RNF11, ITCH and TAX1BP1 only after TNF stimulation; these interaction are transient and they are lost after 1 hour of stimulation with TNF. Interacts with YWHAZ and YWHAH. Interacts with IKBKG; the interaction is induced by TNF stimulation and by polyubiquitin. Interacts with RIPK1. Interacts with UBE2N; the interaction requires TAX1BP1. Interacts with TRAF6. Found in most tissues during development. Strikingly high levels are found in lymphoid organs, including the thymus, spleen, and gut-associated lymphoid tissue. Constitutively expressed in immature and mature thymocyte subpopulations as well as in resting peripheral T-cells; activation of these leads to down-regulation.

It is found in the cytoplasm. The protein resides in the nucleus. The protein localises to the lysosome. The catalysed reaction is Thiol-dependent hydrolysis of ester, thioester, amide, peptide and isopeptide bonds formed by the C-terminal Gly of ubiquitin (a 76-residue protein attached to proteins as an intracellular targeting signal).. Its function is as follows. Ubiquitin-editing enzyme that contains both ubiquitin ligase and deubiquitinase activities. Involved in immune and inflammatory responses signaled by cytokines, such as TNF-alpha and IL-1 beta, or pathogens via Toll-like receptors (TLRs) through terminating NF-kappa-B activity. Essential component of a ubiquitin-editing protein complex, comprising also RNF11, ITCH and TAX1BP1, that ensures the transient nature of inflammatory signaling pathways. In cooperation with TAX1BP1 promotes disassembly of E2-E3 ubiquitin protein ligase complexes in IL-1R and TNFR-1 pathways; affected are at least E3 ligases TRAF6, TRAF2 and BIRC2, and E2 ubiquitin-conjugating enzymes UBE2N and UBE2D3. In cooperation with TAX1BP1 promotes ubiquitination of UBE2N and proteasomal degradation of UBE2N and UBE2D3. Upon TNF stimulation, deubiquitinates 'Lys-63'-polyubiquitin chains on RIPK1 and catalyzes the formation of 'Lys-48'-polyubiquitin chains. This leads to RIPK1 proteasomal degradation and consequently termination of the TNF- or LPS-mediated activation of NF-kappa-B. Deubiquitinates TRAF6 probably acting on 'Lys-63'-linked polyubiquitin. Upon T-cell receptor (TCR)-mediated T-cell activation, deubiquitinates 'Lys-63'-polyubiquitin chains on MALT1 thereby mediating disassociation of the CBM (CARD11:BCL10:MALT1) and IKK complexes and preventing sustained IKK activation. Deubiquitinates NEMO/IKBKG; the function is facilitated by TNIP1 and leads to inhibition of NF-kappa-B activation. Upon stimulation by bacterial peptidoglycans, probably deubiquitinates RIPK2. Can also inhibit I-kappa-B-kinase (IKK) through a non-catalytic mechanism which involves polyubiquitin; polyubiquitin promotes association with IKBKG and prevents IKK MAP3K7-mediated phosphorylation. Targets TRAF2 for lysosomal degradation. In vitro able to deubiquitinate 'Lys-11'-, 'Lys-48'- and 'Lys-63' polyubiquitin chains. Inhibitor of programmed cell death. Has a role in the function of the lymphoid system. Required for LPS-induced production of pro-inflammatory cytokines and IFN beta in LPS-tolerized macrophages. In Mus musculus (Mouse), this protein is Tumor necrosis factor alpha-induced protein 3 (Tnfaip3).